Consider the following 445-residue polypeptide: tRNA modification GTPase MnmE (445 aa).

(6S)-5-formyl-5,6,7,8-tetrahydrofolate-binding residues include arginine 20, glutamate 79, and lysine 119. The region spanning 215-371 is the TrmE-type G domain; the sequence is GLKLAIIGPP…ILKNIENIAE (157 aa). Asparagine 225 contributes to the K(+) binding site. Residues 225–230, 244–250, and 269–272 each bind GTP; these read NTGKSS, SNIAGTT, and DTAG. Serine 229 lines the Mg(2+) pocket. Serine 244, isoleucine 246, and threonine 249 together coordinate K(+). Threonine 250 is a binding site for Mg(2+). Lysine 445 serves as a coordination point for (6S)-5-formyl-5,6,7,8-tetrahydrofolate.

Belongs to the TRAFAC class TrmE-Era-EngA-EngB-Septin-like GTPase superfamily. TrmE GTPase family. As to quaternary structure, homodimer. Heterotetramer of two MnmE and two MnmG subunits. Requires K(+) as cofactor.

Its subcellular location is the cytoplasm. Functionally, exhibits a very high intrinsic GTPase hydrolysis rate. Involved in the addition of a carboxymethylaminomethyl (cmnm) group at the wobble position (U34) of certain tRNAs, forming tRNA-cmnm(5)s(2)U34. This is tRNA modification GTPase MnmE from Rickettsia typhi (strain ATCC VR-144 / Wilmington).